The sequence spans 2624 residues: Transcription factor TFIIIB component B'' homolog (2624 aa).

Residues methionine 1–arginine 142 are disordered. Residues methionine 1–tyrosine 299 form an interaction with ZBTB43 region. The segment covering proline 63–glycine 77 has biased composition (basic and acidic residues). The span at serine 99 to serine 119 shows a compositional bias: low complexity. Over residues threonine 120 to serine 132 the composition is skewed to polar residues. Positions threonine 133–arginine 142 are enriched in basic and acidic residues. A coiled-coil region spans residues arginine 144 to arginine 177. The disordered stretch occupies residues leucine 193–glycine 241. The segment covering proline 212 to alanine 229 has biased composition (polar residues). Residues glutamate 230–aspartate 240 are compositionally biased toward acidic residues. In terms of domain architecture, Myb-like spans arginine 295–glutamate 345. The segment at alanine 355–aspartate 470 is required for phosphorylation by CSNK2A1. 4 disordered regions span residues glutamate 379–aspartate 449, leucine 544–leucine 567, glutamate 606–leucine 663, and glutamate 729–aspartate 759. The span at threonine 397–lysine 407 shows a compositional bias: basic residues. Positions alanine 552–serine 565 are enriched in low complexity. Basic and acidic residues-rich tracts occupy residues threonine 637–leucine 663 and glutamate 736–aspartate 759. One copy of the 1; approximate repeat lies at glycine 823–threonine 877. Residues glycine 823–serine 1327 are 9 X 55 AA repeats of G-R-R-X-I-S-P-X-E-N-G-X-E-E-V-K-P-X-X-E-M-E-T-D-L-K-X-T-G-R-E-X-X-X-R-E-K-T-X-E-X-X-D-A-X-E-E-I-D-X-D-L-E-E-T. Tandem repeats lie at residues glycine 878–alanine 932, glycine 933–threonine 987, glycine 988–threonine 1040, glutamate 1041–threonine 1094, glutamate 1095–threonine 1148, and glycine 1149–threonine 1203. Position 915 is a phosphothreonine (threonine 915). 2 stretches are compositionally biased toward basic and acidic residues: residues glutamate 930–leucine 957 and glutamate 979–aspartate 1006. Positions glutamate 930 to lysine 1222 are disordered. Over residues aspartate 1030–glutamate 1041 the composition is skewed to acidic residues. Residues glutamate 1052–glutamate 1079 show a composition bias toward basic and acidic residues. The stretch at proline 1078 to asparagine 1103 forms a coiled coil. Over residues aspartate 1082–glutamate 1095 the composition is skewed to acidic residues. The segment covering alanine 1120–glutamate 1133 has biased composition (basic and acidic residues). A compositionally biased stretch (acidic residues) spans aspartate 1136–leucine 1145. Basic and acidic residues predominate over residues glutamate 1161–isoleucine 1190. The span at glutamate 1194–glutamate 1204 shows a compositional bias: acidic residues. The stretch at glutamate 1204–threonine 1257 is one 8; approximate repeat. The stretch at methionine 1223–glutamate 1284 forms a coiled coil. A 9; approximate repeat occupies glycine 1258–serine 1327. The span at alanine 1306–asparagine 1321 shows a compositional bias: basic and acidic residues. Disordered regions lie at residues alanine 1306–proline 1348, threonine 1365–arginine 1440, threonine 1519–asparagine 1543, lysine 1684–glycine 1722, serine 1819–alanine 1863, glycine 2130–aspartate 2164, serine 2181–histidine 2200, valine 2207–valine 2241, phenylalanine 2444–glycine 2501, and serine 2519–serine 2566. Positions threonine 1326–phenylalanine 1344 are enriched in polar residues. The span at proline 1366–serine 1378 shows a compositional bias: basic and acidic residues. 3 stretches are compositionally biased toward polar residues: residues serine 1379–threonine 1390, serine 1411–glutamine 1421, and threonine 1519–cysteine 1529. Basic and acidic residues predominate over residues lysine 1695–leucine 1719. A compositionally biased stretch (basic residues) spans arginine 1844–threonine 1853. Residues alanine 2131–asparagine 2151 show a composition bias toward basic and acidic residues. Residues valine 2470–alanine 2479 show a composition bias toward basic and acidic residues. The segment covering serine 2488–serine 2498 has biased composition (low complexity). Basic residues predominate over residues histidine 2526–arginine 2544.

As to quaternary structure, component of TFIIIB complex. The TFIIIB complex has two activities, alpha and beta. The TFIIIB-alpha and TFIIIB-beta activities are required for transcription of genes with TFIIIC-bound internal promoters and PSE transcription factor-bound external promoters, respectively. The TFIIIB-alpha activity complex is composed of TBP, BDP1, and a complex containing both BRF2 and at least four stably associated proteins; YY1 facilitates the formation of TFIIIB-alpha activity complex. The TFIIIB-beta activity complex is composed of TBP, BDP1, and BRF1. Interacts with BRF1; this interaction diminishes during mitosis resulting in the release of BDP1 from chromosomal templates. Component of TFIIIC complex. The TFIIIC complex has two activities, C1 and C2. The TFIIIC2 activity complex is only required for transcription of the 'classical' pol III genes whereas the TFIIIC1 activity complex is required for transcription of all pol III genes. The TFIIIC1 activity complex is composed at least of BDP1. Interacts with ZBTB43. Post-translationally, phosphorylated by CSNK2A1 during mitosis, resulting in its release from chromatin and suppression of polymerase III transcription. As to expression, isoform 2 is highly expressed in cerebellum.

It is found in the nucleus. General activator of RNA polymerase III transcription. Requires for transcription from all three types of polymerase III promoters. Requires for transcription of genes with internal promoter elements and with promoter elements upstream of the initiation site. In Homo sapiens (Human), this protein is Transcription factor TFIIIB component B'' homolog (BDP1).